The following is a 237-amino-acid chain: Large ribosomal subunit protein uL1 (237 aa).

The protein belongs to the universal ribosomal protein uL1 family. Part of the 50S ribosomal subunit.

Binds directly to 23S rRNA. The L1 stalk is quite mobile in the ribosome, and is involved in E site tRNA release. Its function is as follows. Protein L1 is also a translational repressor protein, it controls the translation of the L11 operon by binding to its mRNA. The polypeptide is Large ribosomal subunit protein uL1 (Rickettsia typhi (strain ATCC VR-144 / Wilmington)).